Consider the following 397-residue polypeptide: Odorant receptor 22b (397 aa).

The Cytoplasmic portion of the chain corresponds to 1–49 (MLSQFFPHIKEKPLSERVKSRDAFVYLDRVMWSFGWTVPENKRWDLHYK). A helical membrane pass occupies residues 50-70 (LWSTFVTLLIFILLPISVSVE). Topologically, residues 71–85 (YIQRFKTFSAGEFLS) are extracellular. A helical transmembrane segment spans residues 86-105 (SIQIGVNMYGSSFKSYLTMM). Residues 106 to 143 (GYKKRQEAKMSLDELDKRCVCDEERTIVHRHVALGNFC) are Cytoplasmic-facing. Residues 144–164 (YIFYHIAYTSFLISNFLSFIM) traverse the membrane as a helical segment. Over 165–194 (KRIHAWRMYFPYVDPEKQFYISSIAEVILR) the chain is Extracellular. The helical transmembrane segment at 195-215 (GWAVFMDLCTDVCPLISMVIA) threads the bilayer. Residues 216 to 268 (RCHITLLKQRLRNLRSEPGRTEDEYLKELADCVRDHRLILDYVDALRSVFSGT) are Cytoplasmic-facing. A helical transmembrane segment spans residues 269–289 (IFVQFLLIGIVLGLSMINIMF). Residues 290-295 (FSTLST) lie on the Extracellular side of the membrane. Residues 296-316 (GVAVVLFMSCVSMQTFPFCYL) traverse the membrane as a helical segment. Residues 317–347 (CNMIMDDCQEMADSLFQSDWTSADRRYKSTL) lie on the Cytoplasmic side of the membrane. The chain crosses the membrane as a helical span at residues 348–368 (VYFLHNLQQPIILTAGGVFPI). Residues 369–397 (SMQTNLNMVKLAFTVVTIVKQFNLAEKFQ) lie on the Extracellular side of the membrane.

This sequence belongs to the insect chemoreceptor superfamily. Heteromeric odorant receptor channel (TC 1.A.69) family. Or2a subfamily. Interacts with Orco, via conserved C-terminal cytoplasmic loops. Complexes exist early in the endomembrane system in olfactory sensory neurons (OSNs), coupling these complexes to the conserved ciliary trafficking pathway. In terms of tissue distribution, expressed with Orco in 20-22 sensory neurons on the medial-proximal edge of the antenna. This expression pattern matches the distribution of the large sensilla basiconica. Expression is first seen at 60 hours APF in a subset of cells restricted to a subregion of the developing antenna. Expression continues throughout antennal development. Expressed in the ab3A neuron which responds to ethyl butyrate.

Its subcellular location is the cell membrane. Its function is as follows. Odorant receptor which mediates acceptance or avoidance behavior, depending on its substrates. The odorant receptor repertoire encodes a large collection of odor stimuli that vary widely in identity, intensity, and duration. Involved in the behavioral responses to esters. Complexes with Orco to form odorant-sensing units, providing sensitive and prolonged odorant signaling and calcium permeability. They are necessary and sufficient to promote functional reconstitution of odor-evoked signaling in sensory neurons that normally respond only to carbon dioxide. This is Odorant receptor 22b (Or22b) from Drosophila melanogaster (Fruit fly).